The following is a 471-amino-acid chain: Trehalose-binding lipoprotein LpqY (471 aa).

The signal sequence occupies residues 1–28 (MDGRQVVRARRWCATAAVALMTASTVAA). The N-palmitoyl cysteine moiety is linked to residue C29. C29 carries S-diacylglycerol cysteine lipidation. The alpha,alpha-trehalose site is built by N45, E46, Q79, D100, N154, Y198, W279, Y281, G354, and R424. A disulfide bridge links C57 with C375.

The protein belongs to the bacterial solute-binding protein 1 family. In terms of assembly, monomer. The complex is composed of two ATP-binding proteins (SugC), two transmembrane proteins (SugA and SugB) and a solute-binding protein (LpqY).

It is found in the cell inner membrane. Its function is as follows. Part of the ABC transporter complex LpqY-SugA-SugB-SugC, which is highly specific for uptake of trehalose. Involved in the recycling of extracellular trehalose released from trehalose-containing molecules synthesized by M.thermoresistibile. Trehalose uptake is essential for virulence. Binds deuterated trehalose with similar high affinity to trehalose, trehalose analogs including galactotrehalose, 4-azido-4-deoxy-trehalose, 6-azido-6-deoxy-trehalose, 3-azido-3-deoxy-trehalose and mannotrehalose in the order of decreasing affinity, respectively, and 2-azido-2-deoxy-trehalose and kojibiose (alpha1,2-glycosidic bond) with very low affinity. Does not recognize single glucose, 6-amino-6-deoxy-trehalose, trehalose-6-phosphate, nigerose (alpha1,3-glycosidic bond), maltose (alpha1,4-glycosidic bond), isomaltose (alpha1,6-glycosidic bond) or glycerophosphocholine. Decreased recognition of alpha,beta-trehalose and almost no recognition of beta,beta-trehalose. Substrate specificity indicates a strict requirement for an alpha1,1-linked disaccharide. The polypeptide is Trehalose-binding lipoprotein LpqY (Mycolicibacterium thermoresistibile (strain ATCC 19527 / DSM 44167 / CIP 105390 / JCM 6362 / NCTC 10409 / 316) (Mycobacterium thermoresistibile)).